The primary structure comprises 341 residues: Peptidoglycan recognition protein 3 (341 aa).

The N-terminal stretch at 1–17 is a signal peptide; sequence MGTLPWLLAFFILGLQA. N-acetylmuramoyl-L-alanine amidase domains lie at 77–179 and 200–325; these read TIGW…KVCP and PAKY…ILSP. N-linked (GlcNAc...) asparagine glycosylation is present at N113. 3 disulfides stabilise this stretch: C178-C300, C194-C238, and C214-C220. Positions 231, 235, and 242 each coordinate peptidoglycan. Residues 264–269 are interaction with murein; the sequence is HTYGFN.

It belongs to the N-acetylmuramoyl-L-alanine amidase 2 family. Monomer. Homodimer; disulfide-linked. Heterodimer with PGLYRP4; disulfide-linked. Post-translationally, N-glycosylated. As to expression, detected in skin epidermis, eccrine sweat glands and ducts, ciliary body epithelial cells of the eye, in small intestine, colon, stomach and in mature epithelial cells of the tongue (at protein level). Highly expressed in skin and esophagus, expressed also in tonsils and thymus and to a much lesser extent in the stomach, descending colon, rectum and brain.

The protein localises to the secreted. Functionally, pattern receptor that binds to murein peptidoglycans (PGN) of Gram-positive bacteria. Has bactericidal activity towards Gram-positive bacteria. May kill Gram-positive bacteria by interfering with peptidoglycan biosynthesis. Also binds to Gram-negative bacteria, and has bacteriostatic activity towards Gram-negative bacteria. Plays a role in innate immunity. The chain is Peptidoglycan recognition protein 3 (PGLYRP3) from Homo sapiens (Human).